The chain runs to 286 residues: Probable ketoamine kinase EAE_16955 (286 aa).

ATP is bound at residue 92-94; sequence EYL. Catalysis depends on Asp-194, which acts as the Proton acceptor.

The protein belongs to the fructosamine kinase family.

In terms of biological role, ketoamine kinase that phosphorylates ketoamines on the third carbon of the sugar moiety to generate ketoamine 3-phosphate. In Klebsiella aerogenes (strain ATCC 13048 / DSM 30053 / CCUG 1429 / JCM 1235 / KCTC 2190 / NBRC 13534 / NCIMB 10102 / NCTC 10006 / CDC 819-56) (Enterobacter aerogenes), this protein is Probable ketoamine kinase EAE_16955.